Here is a 449-residue protein sequence, read N- to C-terminus: PC-esterase domain-containing protein 1A (449 aa).

This sequence belongs to the PC-esterase family.

This is PC-esterase domain-containing protein 1A (Pced1a) from Mus musculus (Mouse).